Here is a 108-residue protein sequence, read N- to C-terminus: Ribonuclease P protein component 4 (108 aa).

Residues Cys67, Cys70, Cys93, and Cys96 each contribute to the Zn(2+) site.

It belongs to the eukaryotic/archaeal RNase P protein component 4 family. As to quaternary structure, consists of a catalytic RNA component and at least 4-5 protein subunits. Zn(2+) serves as cofactor.

Its subcellular location is the cytoplasm. The enzyme catalyses Endonucleolytic cleavage of RNA, removing 5'-extranucleotides from tRNA precursor.. Its function is as follows. Part of ribonuclease P, a protein complex that generates mature tRNA molecules by cleaving their 5'-ends. In Methanococcoides burtonii (strain DSM 6242 / NBRC 107633 / OCM 468 / ACE-M), this protein is Ribonuclease P protein component 4.